A 556-amino-acid chain; its full sequence is 2-succinyl-5-enolpyruvyl-6-hydroxy-3-cyclohexene-1-carboxylate synthase (556 aa).

It belongs to the TPP enzyme family. MenD subfamily. In terms of assembly, homodimer. Mg(2+) is required as a cofactor. It depends on Mn(2+) as a cofactor. Thiamine diphosphate serves as cofactor.

It catalyses the reaction isochorismate + 2-oxoglutarate + H(+) = 5-enolpyruvoyl-6-hydroxy-2-succinyl-cyclohex-3-ene-1-carboxylate + CO2. Its pathway is quinol/quinone metabolism; 1,4-dihydroxy-2-naphthoate biosynthesis; 1,4-dihydroxy-2-naphthoate from chorismate: step 2/7. It participates in quinol/quinone metabolism; menaquinone biosynthesis. In terms of biological role, catalyzes the thiamine diphosphate-dependent decarboxylation of 2-oxoglutarate and the subsequent addition of the resulting succinic semialdehyde-thiamine pyrophosphate anion to isochorismate to yield 2-succinyl-5-enolpyruvyl-6-hydroxy-3-cyclohexene-1-carboxylate (SEPHCHC). The polypeptide is 2-succinyl-5-enolpyruvyl-6-hydroxy-3-cyclohexene-1-carboxylate synthase (Escherichia coli (strain K12 / MC4100 / BW2952)).